We begin with the raw amino-acid sequence, 746 residues long: Histone-lysine N-methyltransferase EZH2 (746 aa).

An interaction with DNMT1, DNMT3A and DNMT3B region spans residues 1-340 (MGQTGKKSEK…AKEFAAALTA (340 aa)). A Phosphoserine; by PKB/AKT1 modification is found at Ser21. Residues 39–68 (KTMFSSNRQKILERTETLNQEWKQRRIQPV) are interaction with EED. Ser75 carries O-linked (GlcNAc) serine glycosylation. Position 76 is a phosphoserine (Ser76). The segment at 180–217 (QYNDDDDDDDGDDPDEREEKQKDLEDNRDDKETCPPRK) is disordered. Acidic residues predominate over residues 182–195 (NDDDDDDDGDDPDE). A compositionally biased stretch (basic and acidic residues) spans 196–217 (REEKQKDLEDNRDDKETCPPRK). Residues 329-522 (EGAKEFAAAL…SSNHVYNYQP (194 aa)) form an interaction with CDYL region. At Thr339 the chain carries Phosphothreonine. The disordered stretch occupies residues 340–426 (AERIKTPPKR…PIKMKPNIEP (87 aa)). Phosphothreonine; by CDK1 and CDK2 is present on Thr345. Basic residues predominate over residues 345-357 (TPPKRPGGRRRGR). Ser363 and Ser366 each carry phosphoserine. Thr367 carries the post-translational modification Phosphothreonine. Positions 374 to 385 (ESKDTDSDREAG) are enriched in basic and acidic residues. Position 487 is a phosphothreonine (Thr487). Residues 503–605 (CRKIQLKKDG…SKNVSCKNCS (103 aa)) enclose the CXC domain. The SET domain occupies 612 to 727 (KHLLLAPSDV…TGEELFFDYR (116 aa)). Lys634 participates in a covalent cross-link: Glycyl lysine isopeptide (Lys-Gly) (interchain with G-Cter in SUMO2).

The protein belongs to the class V-like SAM-binding methyltransferase superfamily. Histone-lysine methyltransferase family. EZ subfamily. In terms of assembly, component of the PRC2/EED-EZH2 complex, which includes EED, EZH2, SUZ12, RBBP4 and RBBP7 and possibly AEBP2. The minimum components required for methyltransferase activity of the PRC2/EED-EZH2 complex are EED, EZH2 and SUZ12. The PRC2 complex may also interact with DNMT1, DNMT3A, DNMT3B and PHF1 via the EZH2 subunit and with SIRT1 via the SUZ12 subunit. Interacts with HDAC1 and HDAC2. Binds ATRX via the SET domain. Interacts with PRAME. Interacts with CDYL. Interacts with EED. Interacts with BMAL1. Interacts with CLOCK and CRY1. Interacts with DNMT3L; the interaction is direct. Interacts with EZHIP; the interaction blocks EZH2 methyltransferase activity. Interacts with ZNF263; recruited to the SIX3 promoter along with other proteins involved in chromatin modification and transcriptional corepression where it contributes to transcriptional repression. Interacts with ARMC12. Interacts with ZMYND8; the interaction is dependent on the presence of chromatin. Interacts with DDX18; this interaction inhibits the PRC2 complex. Phosphorylated by AKT1. Phosphorylation by AKT1 reduces methyltransferase activity. Phosphorylation at Thr-345 by CDK1 and CDK2 promotes maintenance of H3K27me3 levels at EZH2-target loci, thus leading to epigenetic gene silencing. Post-translationally, sumoylated. In terms of processing, glycosylated: O-GlcNAcylation at Ser-75 by OGT increases stability of EZH2 and facilitates the formation of H3K27me3 by the PRC2/EED-EZH2 complex. Present in actively dividing cells. Widely expressed in early embryos. In later embryogenesis, expression restricted to central and peripheral nervous system, liver and thymus. In adult, highest expression in spleen, testis and placenta. Lower levels in intestine, muscle and ovary and very low levels in brain and liver. No expression in heart, thyroid gland, lung and kidney.

It localises to the nucleus. The protein resides in the chromosome. The catalysed reaction is L-lysyl(27)-[histone H3] + 3 S-adenosyl-L-methionine = N(6),N(6),N(6)-trimethyl-L-lysyl(27)-[histone H3] + 3 S-adenosyl-L-homocysteine + 3 H(+). Its function is as follows. Polycomb group (PcG) protein. Catalytic subunit of the PRC2/EED-EZH2 complex, which methylates (H3K9me) and 'Lys-27' (H3K27me) of histone H3, leading to transcriptional repression of the affected target gene. Able to mono-, di- and trimethylate 'Lys-27' of histone H3 to form H3K27me1, H3K27me2 and H3K27me3, respectively. Displays a preference for substrates with less methylation, loses activity when progressively more methyl groups are incorporated into H3K27, H3K27me0 &gt; H3K27me1 &gt; H3K27me2. Compared to EZH1-containing complexes, it is more abundant in embryonic stem cells and plays a major role in forming H3K27me3, which is required for embryonic stem cell identity and proper differentiation. The PRC2/EED-EZH2 complex may also serve as a recruiting platform for DNA methyltransferases, thereby linking two epigenetic repression systems. Genes repressed by the PRC2/EED-EZH2 complex include HOXA7, HOXB6 and HOXC8. EZH2 can also methylate non-histone proteins such as the transcription factor GATA4 and the nuclear receptor RORA. Regulates the circadian clock via histone methylation at the promoter of the circadian genes. Essential for the CRY1/2-mediated repression of the transcriptional activation of PER1/2 by the CLOCK-BMAL1 heterodimer; involved in the di and trimethylation of 'Lys-27' of histone H3 on PER1/2 promoters which is necessary for the CRY1/2 proteins to inhibit transcription. The chain is Histone-lysine N-methyltransferase EZH2 from Mus musculus (Mouse).